The chain runs to 1236 residues: DNA-directed RNA polymerase II subunit RPB2 (1236 aa).

D846 provides a ligand contact to Mg(2+). Positions 1172, 1175, 1191, and 1194 each coordinate Zn(2+). A C4-type zinc finger spans residues 1172-1194; that stretch reads CGVCGLMSVIANLKKNQFECRSC.

Belongs to the RNA polymerase beta chain family. Component of the RNA polymerase II (Pol II) complex consisting of 12 subunits.

It is found in the nucleus. The enzyme catalyses RNA(n) + a ribonucleoside 5'-triphosphate = RNA(n+1) + diphosphate. Its function is as follows. DNA-dependent RNA polymerase catalyzes the transcription of DNA into RNA using the four ribonucleoside triphosphates as substrates. Second largest component of RNA polymerase II which synthesizes mRNA precursors and many functional non-coding RNAs. Proposed to contribute to the polymerase catalytic activity and forms the polymerase active center together with the largest subunit. Pol II is the central component of the basal RNA polymerase II transcription machinery. It is composed of mobile elements that move relative to each other. RPB2 is part of the core element with the central large cleft, the clamp element that moves to open and close the cleft and the jaws that are thought to grab the incoming DNA template. In Meyerozyma guilliermondii (strain ATCC 6260 / CBS 566 / DSM 6381 / JCM 1539 / NBRC 10279 / NRRL Y-324) (Yeast), this protein is DNA-directed RNA polymerase II subunit RPB2 (RPB2).